The primary structure comprises 338 residues: Solute carrier family 35 member G3 (338 aa).

The interval 1–24 is disordered; it reads MAGSHPYFNQPDSTHPSPPSAPPS. Helical transmembrane passes span 37-57, 67-87, 105-125, 160-180, 190-210, 221-241, 250-270, 281-301, and 305-325; these read TSGL…VGPL, LPSL…ALLL, FFCA…VQVV, CGLL…LWTL, ALGY…LLVY, TVAF…LFVL, LLSW…FTCV, LVCA…YYML, and VAPS…IITA. The region spanning 49–174 is the EamA 1 domain; sequence LPAGFVGPLS…CILGLIIIVG (126 aa). The EamA 2 domain occupies 272–325; the sequence is YAVTKAHPALVCAVLHSEVVVALILQYYMLHETVAPSDIMGAGVALGSIAIITA.

The protein belongs to the SLC35G solute transporter family.

The protein resides in the membrane. The chain is Solute carrier family 35 member G3 (SLC35G3) from Pan paniscus (Pygmy chimpanzee).